We begin with the raw amino-acid sequence, 180 residues long: Acireductone dioxygenase (180 aa).

Positions 97, 99, 103, and 141 each coordinate Fe(2+). Residues His-97, His-99, Glu-103, and His-141 each contribute to the Ni(2+) site.

It belongs to the acireductone dioxygenase (ARD) family. Monomer. The cofactor is Fe(2+). It depends on Ni(2+) as a cofactor.

It catalyses the reaction 1,2-dihydroxy-5-(methylsulfanyl)pent-1-en-3-one + O2 = 3-(methylsulfanyl)propanoate + CO + formate + 2 H(+). It carries out the reaction 1,2-dihydroxy-5-(methylsulfanyl)pent-1-en-3-one + O2 = 4-methylsulfanyl-2-oxobutanoate + formate + 2 H(+). It participates in amino-acid biosynthesis; L-methionine biosynthesis via salvage pathway; L-methionine from S-methyl-5-thio-alpha-D-ribose 1-phosphate: step 5/6. In terms of biological role, catalyzes 2 different reactions between oxygen and the acireductone 1,2-dihydroxy-3-keto-5-methylthiopentene (DHK-MTPene) depending upon the metal bound in the active site. Fe-containing acireductone dioxygenase (Fe-ARD) produces formate and 2-keto-4-methylthiobutyrate (KMTB), the alpha-ketoacid precursor of methionine in the methionine recycle pathway. Ni-containing acireductone dioxygenase (Ni-ARD) produces methylthiopropionate, carbon monoxide and formate, and does not lie on the methionine recycle pathway. The protein is Acireductone dioxygenase of Klebsiella pneumoniae subsp. pneumoniae (strain ATCC 700721 / MGH 78578).